Consider the following 925-residue polypeptide: Nuclear factor of activated T-cells, cytoplasmic 2 (925 aa).

Positions 1-95 are disordered; it reads MNAPERQPQP…FGEPDRVGPQ (95 aa). Phosphoserine is present on Ser-23. Positions 26-34 match the 9aaTAD motif; that stretch reads DELDFSILF. A phosphoserine mark is found at Ser-99, Ser-107, and Ser-110. Positions 111 to 116 are calcineurin-binding; it reads PRIEIT. The interval 119-199 is transactivation domain A (TAD-A); the sequence is HELIQAVGPL…CVSPNNGGPD (81 aa). Phosphoserine is present on residues Ser-148, Ser-168, Ser-171, Ser-172, Ser-174, Ser-175, Ser-177, and Ser-180. Residues 161-175 form a required for cytoplasmic retention of the phosphorylated form region; that stretch reads YREPLCLSPASSGSS. 2 tandem repeats follow at residues 184–200 and 213–229. The tract at residues 184–286 is 3 X approximate SP repeats; the sequence is SPYTSPCVSP…PQPSSHVAPQ (103 aa). The disordered stretch occupies residues 195–297; the sequence is NGGPDDLCPQ…HGSPAGYPPV (103 aa). Residues Ser-213, Ser-217, Ser-221, Ser-236, and Ser-243 each carry the phosphoserine modification. A compositionally biased stretch (polar residues) spans 214–224; the sequence is PRTSPIMSPRT. The short motif at 251–253 is the Nuclear localization signal element; it reads KRR. Residues Ser-255, Ser-268, Ser-274, Ser-276, Ser-280, Ser-326, Ser-330, and Ser-363 each carry the phosphoserine modification. Positions 264-281 are enriched in low complexity; sequence PPGASPQRSRSPSPQPSS. One copy of the 3; approximate repeat lies at 272–286; it reads SRSPSPQPSSHVAPQ. The 183-residue stretch at 392–574 folds into the RHD domain; sequence ASLPPLEWPL…NPIECSQRSA (183 aa). A DNA-binding region spans residues 421–428; it reads RAHYETEG. A Nuclear localization signal motif is present at residues 664–666; the sequence is KRK. A phosphoserine mark is found at Ser-755, Ser-757, Ser-759, Ser-856, and Ser-859. Residues 839–894 form a disordered region; it reads PGTTRPGPPPVSQGQRLSPGSYPTVIQQQNATSQRAAKNGPPVSDQKEVLPAGVTI. Over residues 862–874 the composition is skewed to polar residues; that stretch reads TVIQQQNATSQRA. The short motif at 904-913 is the Nuclear export signal element; the sequence is YLDDVNEIIR.

As to quaternary structure, member of the multicomponent NFATC transcription complex that consists of at least two components, a pre-existing cytoplasmic component NFATC2 and an inducible nuclear component NFATC1. Other members such as NFATC4, NFATC3 or members of the activating protein-1 family, MAF, GATA4 and Cbp/p300 can also bind the complex. The phosphorylated form specifically interacts with XPO1; which mediates nuclear export. NFATC proteins bind to DNA as monomers. Interacts with NFATC2IP. Interacts with FOXP3. Interacts with TBX21 ('Thr-303' phosphorylated form). Interacts with KAT2A. Interacts with HOMER2 and HOMER3; this interaction competes with calcineurin/PPP3CA-binding and hence prevents NFATC2 dephosphorylation and activation. Interacts with protein phosphatase PPP3CA/calcineurin A. Interacts with AKAP5 (via leucine zipper domain); this is required for NFATC2/NFAT1 recruitment to CRAC channels. In resting cells, phosphorylated by NFATC-kinase on at least 18 sites in the 99-363 region. Upon cell stimulation, all these sites except Ser-243 are dephosphorylated by calcineurin. Dephosphorylation induces a conformational change that simultaneously exposes an NLS and masks an NES, which results in nuclear localization. Simultaneously, Ser-53 or Ser-56 is phosphorylated; which is required for full transcriptional activity. In terms of processing, ubiquitinated in endothelial cells by RNF213 downstream of the non-canonical Wnt signaling pathway, leading to its degradation by the proteasome. In terms of tissue distribution, expressed in thymus, spleen, heart, testis, brain, placenta, muscle and pancreas. Isoform 1 is highly expressed in the small intestine, heart, testis, prostate, thymus, placenta and thyroid. Isoform 3 is highly expressed in stomach, uterus, placenta, trachea and thyroid.

Its subcellular location is the cytoplasm. It is found in the nucleus. Its function is as follows. Plays a role in the inducible expression of cytokine genes in T-cells, especially in the induction of the IL-2, IL-3, IL-4, TNF-alpha or GM-CSF. Promotes invasive migration through the activation of GPC6 expression and WNT5A signaling pathway. Is involved in the negative regulation of chondrogenesis. Recruited by AKAP5 to ORAI1 pore-forming subunit of CRAC channels in Ca(2+) signaling microdomains where store-operated Ca(2+) influx is coupled to calmodulin and calcineurin signaling and activation of NFAT-dependent transcriptional responses. This is Nuclear factor of activated T-cells, cytoplasmic 2 (NFATC2) from Homo sapiens (Human).